The following is a 719-amino-acid chain: Potassium-transporting ATPase ATP-binding subunit (719 aa).

4 helical membrane-spanning segments follow: residues Leu-35–Phe-55, Val-62–Glu-82, Ile-228–Gly-248, and Phe-254–Met-274. The active-site 4-aspartylphosphate intermediate is the Asp-318. ATP contacts are provided by Asp-355 and Glu-359. A disordered region spans residues Gly-372–Pro-396. Polar residues predominate over residues Lys-373–Ser-383. Residues Phe-416–Ser-423 and Lys-435 contribute to the ATP site. The Mg(2+) site is built by Asp-554 and Asp-558. The next 3 helical transmembrane spans lie at Phe-624–Leu-644, Ala-652–Leu-672, and Leu-698–Phe-718.

It belongs to the cation transport ATPase (P-type) (TC 3.A.3) family. Type IA subfamily. As to quaternary structure, the system is composed of three essential subunits: KdpA, KdpB and KdpC. The complex also contains KdpF, a small non-essential subunit.

It localises to the cell membrane. It catalyses the reaction K(+)(out) + ATP + H2O = K(+)(in) + ADP + phosphate + H(+). Functionally, part of the high-affinity ATP-driven potassium transport (or Kdp) system, which catalyzes the hydrolysis of ATP coupled with the electrogenic transport of potassium into the cytoplasm. This subunit is responsible for energy coupling to the transport system and for the release of the potassium ions to the cytoplasm. The Kdp system is essential for growth under K(+) limitation, and for survival under desiccation and salt crystal inclusion. This is Potassium-transporting ATPase ATP-binding subunit from Halobacterium salinarum (strain ATCC 29341 / DSM 671 / R1).